A 510-amino-acid polypeptide reads, in one-letter code: 2,3-bisphosphoglycerate-independent phosphoglycerate mutase (510 aa).

2 residues coordinate Mn(2+): Asp-14 and Ser-64. Ser-64 functions as the Phosphoserine intermediate in the catalytic mechanism. Substrate is bound by residues His-125, 155 to 156, Arg-187, Arg-193, 259 to 262, and Lys-332; these read RD and RADR. Residues Asp-399, His-403, Asp-440, His-441, and His-459 each contribute to the Mn(2+) site.

This sequence belongs to the BPG-independent phosphoglycerate mutase family. As to quaternary structure, monomer. It depends on Mn(2+) as a cofactor.

The enzyme catalyses (2R)-2-phosphoglycerate = (2R)-3-phosphoglycerate. Its pathway is carbohydrate degradation; glycolysis; pyruvate from D-glyceraldehyde 3-phosphate: step 3/5. Its function is as follows. Catalyzes the interconversion of 2-phosphoglycerate and 3-phosphoglycerate. This is 2,3-bisphosphoglycerate-independent phosphoglycerate mutase from Pseudomonas syringae pv. syringae (strain B728a).